The primary structure comprises 639 residues: Cystathionine gamma-synthase (639 aa).

Lys-443 carries the post-translational modification N6-(pyridoxal phosphate)lysine.

This sequence belongs to the trans-sulfuration enzymes family. MET7 subfamily. Pyridoxal 5'-phosphate serves as cofactor.

It localises to the cytoplasm. Its subcellular location is the nucleus. The enzyme catalyses O-succinyl-L-homoserine + L-cysteine = L,L-cystathionine + succinate + H(+). The protein operates within amino-acid biosynthesis; L-methionine biosynthesis via de novo pathway; L-cystathionine from O-succinyl-L-homoserine: step 1/1. Catalyzes the formation of L-cystathionine from O-succinyl-L-homoserine (OSHS) and L-cysteine, via a gamma-replacement reaction. In the absence of thiol, catalyzes gamma-elimination to form 2-oxobutanoate, succinate and ammonia. In Saccharomyces cerevisiae (strain ATCC 204508 / S288c) (Baker's yeast), this protein is Cystathionine gamma-synthase.